The sequence spans 941 residues: MSDYKHTLNLPKTGFPMRGNLAKREPERLAGWYQTDLYGRLRRERAGKPRFVLHDGPPYANGDIHIGHAVNKILKDIIIKARSMDGYDVPYVPGWDCHGLPIELMVEKKRGKAGAKVSPRAFRDACREFAASQVDGQREDFKRLGVLGDWDNPYLTMDYRTEADILRALGRIIQRGHVTRGFKPVHWCADCGSALAEAEVEYEEKTSPAIDVRFAVLEPEELDRRAGLGGEAAAAGRVAIPIWTTTPWTLPANQAVALHPELEYVVVAFDDELLVLAAELVESAMARYEVDDYRVVGRCDGAVLEGLRLAHPFLEREVPVILGGHVTTDGGTGAVHTAPGHGQDDYVVGQQYDLPTDNPVDGNGVFLPDTPFFAGQHVFKANPKVVDLLAERGALLHHEPYRHSYPHCWRHKTPILFRATPQWFISLDKAGMREHAMAAIKGVSWHPEWGQARIESMVNGRPDWCISRQRNWGVPIALFVDKRSGEPHPESERLIEAVARRVEEAGVDAWFELDPAELLGADAERYEKVTDILDVWFDSGVTHATVLERRDELQVPADLYLEGSDQHRGWFQSSLLTSVGVRETAPYKGVLTHGFTVDEKGHKMSKSRGNVVAPQKVMDTLGADILRLWVASSDYSAEMAVSDGILKRTADAYRRMRNTARFLLANLNGFEPAEHAVAPPDMLPLDRWAVDRAYLLQQQVREAYERYEFHRIYQMVHNFCVVDLGGFYLDVIKDRQYTTKPDSLARRSCQTALWHVAEGLVRWLAPIISFTAEEIWEHLPGERSDSVLLETWYEGLFPLDDSDPFGRAFWDDVLAVRAGVNRELEQLRNDKVIGASLQAEVQLFCPPELKAKLDRLGDELRFVLITSEARVEDLERAPVESVEVPGENGQGFRLFAAASQHPKCTRCWHHRPDVGHHADHPELCGRCVSNVDGEGETRHYA.

A 'HIGH' region motif is present at residues 58-68 (PYANGDIHIGH). Position 562 (glutamate 562) interacts with L-isoleucyl-5'-AMP. The 'KMSKS' region motif lies at 603–607 (KMSKS). Residue lysine 606 coordinates ATP. Positions 904, 907, 924, and 927 each coordinate Zn(2+).

Belongs to the class-I aminoacyl-tRNA synthetase family. IleS type 1 subfamily. Monomer. The cofactor is Zn(2+).

It is found in the cytoplasm. It catalyses the reaction tRNA(Ile) + L-isoleucine + ATP = L-isoleucyl-tRNA(Ile) + AMP + diphosphate. Catalyzes the attachment of isoleucine to tRNA(Ile). As IleRS can inadvertently accommodate and process structurally similar amino acids such as valine, to avoid such errors it has two additional distinct tRNA(Ile)-dependent editing activities. One activity is designated as 'pretransfer' editing and involves the hydrolysis of activated Val-AMP. The other activity is designated 'posttransfer' editing and involves deacylation of mischarged Val-tRNA(Ile). The sequence is that of Isoleucine--tRNA ligase from Alkalilimnicola ehrlichii (strain ATCC BAA-1101 / DSM 17681 / MLHE-1).